Consider the following 818-residue polypeptide: Probable beta-glucosidase I (818 aa).

Asn-176 is a glycosylation site (N-linked (GlcNAc...) asparagine). Asp-204 is a catalytic residue. The region spanning 374-534 (DGKPGFTFRV…SQEELISNAV (161 aa)) is the PA14 domain. N-linked (GlcNAc...) asparagine glycans are attached at residues Asn-453 and Asn-472.

The protein belongs to the glycosyl hydrolase 3 family.

The protein resides in the secreted. The catalysed reaction is Hydrolysis of terminal, non-reducing beta-D-glucosyl residues with release of beta-D-glucose.. It participates in glycan metabolism; cellulose degradation. Beta-glucosidases are one of a number of cellulolytic enzymes involved in the degradation of cellulosic biomass. Catalyzes the last step releasing glucose from the inhibitory cellobiose. This is Probable beta-glucosidase I (bglI) from Aspergillus niger (strain ATCC MYA-4892 / CBS 513.88 / FGSC A1513).